The sequence spans 198 residues: MRFDGGQAGWRETPRPGCTLDQRDWLTRGGSLTAHLARLGRVNVRVTREAVDCPWFDEPDAVASAPRAPMWVREVILSVDGTPYVAAHSIAPLAASKGVWQAMRRLRTRPLAELLYSDPQVERSALVSRRVIAGHPLYALATHALGGARAPHSFAARRSVFQRHGKPLMVTECMLPALWRHLDAHGDGPRSGGPGGGA.

Residues arginine 73, leucine 111, and glutamate 172 each coordinate substrate.

This sequence belongs to the UbiC family.

The protein resides in the cytoplasm. It catalyses the reaction chorismate = 4-hydroxybenzoate + pyruvate. It participates in cofactor biosynthesis; ubiquinone biosynthesis. Removes the pyruvyl group from chorismate, with concomitant aromatization of the ring, to provide 4-hydroxybenzoate (4HB) for the ubiquinone pathway. This chain is Probable chorismate pyruvate-lyase, found in Burkholderia lata (strain ATCC 17760 / DSM 23089 / LMG 22485 / NCIMB 9086 / R18194 / 383).